Consider the following 643-residue polypeptide: Ecto-NOX disulfide-thiol exchanger 1 (643 aa).

One can recognise an RRM domain in the interval 142 to 221 (KTVFVGGLPE…GRLHVDFAQA (80 aa)). Coiled-coil stretches lie at residues 307–342 (VQSANSHVRRLMNEKATHEQEMEEAKENFKNALTGI) and 425–570 (QAYA…EALL).

The protein belongs to the ENOX family. The cofactor is Cu cation. In terms of tissue distribution, expressed in lymphocyte cells, breast and breast cancer (at protein level). Found in the sera of cancer patients with a wide variety of cancers including breast, prostate, lung and ovarian cancers, leukemias, and lymphomas. Found also in the serum of healthy volunteers or patients with disorders other than cancer. Probably shed into serum by cancer cells.

Its subcellular location is the cell membrane. It is found in the secreted. It localises to the extracellular space. With respect to regulation, not inhibited by the antitumor sulfonylurea LY181984, the vabilloid capsaicin, and retinoids. Probably acts as a terminal oxidase of plasma electron transport from cytosolic NAD(P)H via hydroquinones to acceptors at the cell surface. Hydroquinone oxidase activity alternates with a protein disulfide-thiol interchange/oxidoreductase activity which may control physical membrane displacements associated with vesicle budding or cell enlargement. The activities oscillate with a period length of 24 minutes and play a role in control of the ultradian cellular biological clock. This Homo sapiens (Human) protein is Ecto-NOX disulfide-thiol exchanger 1 (ENOX1).